A 100-amino-acid polypeptide reads, in one-letter code: Small ribosomal subunit protein uS14 (100 aa).

The protein belongs to the universal ribosomal protein uS14 family. Part of the 30S ribosomal subunit. Contacts proteins S3 and S10.

Functionally, binds 16S rRNA, required for the assembly of 30S particles and may also be responsible for determining the conformation of the 16S rRNA at the A site. This is Small ribosomal subunit protein uS14 from Synechococcus sp. (strain RCC307).